The chain runs to 432 residues: PC-esterase domain-containing protein 1B (432 aa).

Disordered stretches follow at residues 264 to 293 and 398 to 432; these read EWIK…LSPP and RGFG…PRPQ.

It belongs to the PC-esterase family.

The sequence is that of PC-esterase domain-containing protein 1B from Homo sapiens (Human).